Here is a 118-residue protein sequence, read N- to C-terminus: Large ribosomal subunit protein uL24 (118 aa).

It belongs to the universal ribosomal protein uL24 family. As to quaternary structure, part of the 50S ribosomal subunit.

Its function is as follows. One of two assembly initiator proteins, it binds directly to the 5'-end of the 23S rRNA, where it nucleates assembly of the 50S subunit. In terms of biological role, one of the proteins that surrounds the polypeptide exit tunnel on the outside of the subunit. This is Large ribosomal subunit protein uL24 from Prochlorococcus marinus (strain MIT 9303).